A 362-amino-acid chain; its full sequence is Serine/threonine-protein kinase SBK2 (362 aa).

Residues 1 to 11 (MPGKQSEDKPM) are compositionally biased toward basic and acidic residues. The segment at 1 to 26 (MPGKQSEDKPMEVSTVEDGGDEGLGG) is disordered. Positions 62 to 330 (YEEVRPLGQG…IKSYLGQPWK (269 aa)) constitute a Protein kinase domain. Residues 68–76 (LGQGRFGRV) and Lys-91 each bind ATP. The active-site Proton acceptor is Asp-183. Residues 329–362 (WKQREGEAEELATELREDGWRGGQEAAKGEQPAC) are disordered.

This sequence belongs to the protein kinase superfamily. Ser/Thr protein kinase family. STKL subfamily.

The catalysed reaction is L-seryl-[protein] + ATP = O-phospho-L-seryl-[protein] + ADP + H(+). It catalyses the reaction L-threonyl-[protein] + ATP = O-phospho-L-threonyl-[protein] + ADP + H(+). This is Serine/threonine-protein kinase SBK2 (Sbk2) from Mus musculus (Mouse).